The following is a 321-amino-acid chain: Cytochrome c biogenesis protein CcsA (321 aa).

8 helical membrane passes run 17-37 (VVSIVIIIHFLTLLVNEFVGL), 48-68 (TFFCLTGLLITRWIYSGHLPI), 71-91 (LYESLIFLSWIFSIIHMVPYF), 98-118 (LSTITAPSTFFTQGFATWGLL), 143-163 (MVSGYAALLCGSLLSAALLVI), 225-245 (ILSIGFLFLTIGILSGAVWAN), 259-273 (TWAFITWTIFAIYFH), and 286-306 (AIVASIGFLIIWICYFGVNLL).

It belongs to the CcmF/CycK/Ccl1/NrfE/CcsA family. In terms of assembly, may interact with Ccs1.

It is found in the plastid. It localises to the chloroplast thylakoid membrane. Functionally, required during biogenesis of c-type cytochromes (cytochrome c6 and cytochrome f) at the step of heme attachment. This Populus trichocarpa (Western balsam poplar) protein is Cytochrome c biogenesis protein CcsA.